Reading from the N-terminus, the 274-residue chain is NH(3)-dependent NAD(+) synthetase (274 aa).

Residue 46 to 53 participates in ATP binding; the sequence is GISGGQDS. Position 52 (D52) interacts with Mg(2+). R140 is a binding site for deamido-NAD(+). T160 provides a ligand contact to ATP. E165 is a binding site for Mg(2+). Deamido-NAD(+)-binding residues include K173 and D180. 2 residues coordinate ATP: K189 and T211. 260–261 is a deamido-NAD(+) binding site; that stretch reads HK.

The protein belongs to the NAD synthetase family. In terms of assembly, homodimer.

It catalyses the reaction deamido-NAD(+) + NH4(+) + ATP = AMP + diphosphate + NAD(+) + H(+). Its pathway is cofactor biosynthesis; NAD(+) biosynthesis; NAD(+) from deamido-NAD(+) (ammonia route): step 1/1. Catalyzes the ATP-dependent amidation of deamido-NAD to form NAD. Uses ammonia as a nitrogen source. This is NH(3)-dependent NAD(+) synthetase from Pectobacterium carotovorum subsp. carotovorum (strain PC1).